Consider the following 529-residue polypeptide: UDP-glucuronosyltransferase 2B23 (529 aa).

The N-terminal stretch at 1-24 (MSVKWTSVILLIQLSFYFSSGSCG) is a signal peptide. N-linked (GlcNAc...) asparagine glycosylation is found at N67 and N68. Residues 494–514 (IGFLLACVATVIFIIMKCCLF) form a helical membrane-spanning segment.

Belongs to the UDP-glycosyltransferase family. Expressed in several tissues, including the prostate, mammary gland, epididymis, testis and ovary.

The protein resides in the microsome membrane. It is found in the endoplasmic reticulum membrane. The catalysed reaction is glucuronate acceptor + UDP-alpha-D-glucuronate = acceptor beta-D-glucuronoside + UDP + H(+). Functionally, UDPGTs are of major importance in the conjugation and subsequent elimination of potentially toxic xenobiotics and endogenous compounds. This isozyme has glucuronidating capacity on 6 steroids and the bile acid, hyodeoxycholic acid. May potentially play an important role in estrogen and androgen catabolism in peripheral steroid target tissues. The polypeptide is UDP-glucuronosyltransferase 2B23 (UGT2B23) (Macaca fascicularis (Crab-eating macaque)).